The primary structure comprises 404 residues: O-antigen ligase (404 aa).

The next 11 membrane-spanning stretches (helical) occupy residues Ile16–Asp32, His39–Arg55, Ser67–Leu84, Phe96–Leu115, Val127–Ile147, Ser168–Arg183, Leu189–Trp221, Trp228–Ile246, Ile324–Tyr343, Tyr363–Val379, and Gln385–Leu401.

This sequence belongs to the O-antigen ligase family.

It localises to the cell inner membrane. The enzyme catalyses a lipid-linked O antigen + a lipid A-core oligosaccharide = a lipopolysaccharide + a polyisoprenyl diphosphate.. It functions in the pathway bacterial outer membrane biogenesis; lipopolysaccharide biosynthesis. Functionally, transferase involved in the biosynthesis of the lipopolysaccharide (LPS). Catalyzes the transfer of a polymerized O-antigen molecule from its polyprenyl diphosphate membrane anchor to a terminal sugar of the lipid A-core oligosaccharide, finalizing the biosynthesis of the lipopolysaccharide. May also be involved in a feedback mechanism to regulate O-unit synthesis, based on the availability of O units on the periplasmic face of the membrane. This Salmonella typhimurium (strain LT2 / SGSC1412 / ATCC 700720) protein is O-antigen ligase.